A 550-amino-acid polypeptide reads, in one-letter code: Chaperonin GroEL 2 (550 aa).

Residues 30 to 33, Lys51, 87 to 91, Gly415, 480 to 482, and Asp496 each bind ATP; these read TLGP, DGTTT, and NAA.

Belongs to the chaperonin (HSP60) family. In terms of assembly, forms a cylinder of 14 subunits composed of two heptameric rings stacked back-to-back. Interacts with the co-chaperonin GroES.

The protein resides in the cytoplasm. It carries out the reaction ATP + H2O + a folded polypeptide = ADP + phosphate + an unfolded polypeptide.. Its function is as follows. Together with its co-chaperonin GroES, plays an essential role in assisting protein folding. The GroEL-GroES system forms a nano-cage that allows encapsulation of the non-native substrate proteins and provides a physical environment optimized to promote and accelerate protein folding. The protein is Chaperonin GroEL 2 of Erythrobacter litoralis (strain HTCC2594).